A 304-amino-acid polypeptide reads, in one-letter code: MRLPIFLDTDPGIDDAVAIAAAIFAPELDLQLMTTVAGNVSVEKTTRNALQLLHFWNAEIPLAQGAAVPLVRAPRDAASVHGESGMAGYDFVEHNRKPLGIPAFLAIRDALMRAPEPVTLVAIGPLTNIALLLSQCPECKPYIRRLVIMGGSAGRGNCTPNAEFNIAADPEAAACVFRSGIEIVMCGLDVTNQAILTPDYLATLPELNRTGKMLHALFSHYRSGSMQSGLRMHDLCAIALLVRPELFTLKPCFVAVETQGEFTSGTTVVDIDGCLGKPANVKVALDLDVKGFQQWVAEVLALAS.

Residue His-233 is part of the active site.

The protein belongs to the IUNH family. RihC subfamily.

Functionally, hydrolyzes both purine and pyrimidine ribonucleosides with a broad-substrate specificity. The sequence is that of Non-specific ribonucleoside hydrolase RihC from Shigella boydii serotype 18 (strain CDC 3083-94 / BS512).